We begin with the raw amino-acid sequence, 301 residues long: Phosphatidylglycerol--prolipoprotein diacylglyceryl transferase (301 aa).

Transmembrane regions (helical) follow at residues 17–37 (LAVR…IVVG), 59–79 (MLFY…VLFY), 97–117 (GGMS…LFAW), 129–149 (FVAP…FING), 203–223 (PSQL…LWLF), 230–250 (VGAA…TVEF), and 257–277 (FLGL…PMII). R142 contacts a 1,2-diacyl-sn-glycero-3-phospho-(1'-sn-glycerol).

Belongs to the Lgt family.

The protein resides in the cell inner membrane. It catalyses the reaction L-cysteinyl-[prolipoprotein] + a 1,2-diacyl-sn-glycero-3-phospho-(1'-sn-glycerol) = an S-1,2-diacyl-sn-glyceryl-L-cysteinyl-[prolipoprotein] + sn-glycerol 1-phosphate + H(+). It functions in the pathway protein modification; lipoprotein biosynthesis (diacylglyceryl transfer). Functionally, catalyzes the transfer of the diacylglyceryl group from phosphatidylglycerol to the sulfhydryl group of the N-terminal cysteine of a prolipoprotein, the first step in the formation of mature lipoproteins. In Paraburkholderia phymatum (strain DSM 17167 / CIP 108236 / LMG 21445 / STM815) (Burkholderia phymatum), this protein is Phosphatidylglycerol--prolipoprotein diacylglyceryl transferase.